The following is a 305-amino-acid chain: Phosphatidylinositol:ceramide inositolphosphotransferase 2 (305 aa).

6 consecutive transmembrane segments (helical) span residues L34–I54, E81–L101, K105–L125, V168–V188, R198–S218, and H221–D241. H180 is an active-site residue. Residues H221 and D225 contribute to the active site.

It belongs to the sphingomyelin synthase family. Expressed in leaves, roots, stems, flowers and siliques.

It is found in the golgi apparatus. Its subcellular location is the trans-Golgi network membrane. It carries out the reaction an N-(2R-hydroxy-very-long-chain fatty acyl)-(R)-4-hydroxysphingoid base + a 1,2-diacyl-sn-glycero-3-phospho-(1D-myo-inositol) = a 1D-myo-inositol-1-phospho-N-[(R)-2-hydroxy-very-long-chain fatty acyl]-(R)-4-hydroxysphingoid base + a 1,2-diacyl-sn-glycerol. Its pathway is sphingolipid metabolism. Functionally, catalyzes the transfer of the phosphorylinositol group from phosphatidylinositol (PI) to phytoceramide, an essential step in sphingolipid biosynthesis. May play an important role in modulating plant programmed cell death (PCD) associated with defense (e.g. toward Golovinomyces cichoracearum) by promoting sphingolipid metabolism and thus regulating ceramide accumulation. In Arabidopsis thaliana (Mouse-ear cress), this protein is Phosphatidylinositol:ceramide inositolphosphotransferase 2.